The following is a 260-amino-acid chain: Probable carbohydrate esterase At4g34215 (260 aa).

Residues 1-22 are disordered; it reads MEGGSITPGEDKPEIQSPIPPN. Catalysis depends on residues Ser-31, Asp-235, and His-238.

Belongs to the carbohydrate esterase 6 family.

In Arabidopsis thaliana (Mouse-ear cress), this protein is Probable carbohydrate esterase At4g34215.